The chain runs to 429 residues: Histidine--tRNA ligase (429 aa).

Belongs to the class-II aminoacyl-tRNA synthetase family. In terms of assembly, homodimer.

It localises to the cytoplasm. The enzyme catalyses tRNA(His) + L-histidine + ATP = L-histidyl-tRNA(His) + AMP + diphosphate + H(+). The sequence is that of Histidine--tRNA ligase from Desulfotalea psychrophila (strain LSv54 / DSM 12343).